The sequence spans 379 residues: 23S rRNA (uracil(747)-C(5))-methyltransferase RlmC (379 aa).

4 residues coordinate [4Fe-4S] cluster: Cys-3, Cys-11, Cys-14, and Cys-86. Residues Gln-211, Phe-240, Glu-262, and Asn-310 each coordinate S-adenosyl-L-methionine. Residue Cys-337 is the Nucleophile of the active site.

This sequence belongs to the class I-like SAM-binding methyltransferase superfamily. RNA M5U methyltransferase family. RlmC subfamily.

The enzyme catalyses uridine(747) in 23S rRNA + S-adenosyl-L-methionine = 5-methyluridine(747) in 23S rRNA + S-adenosyl-L-homocysteine + H(+). Its function is as follows. Catalyzes the formation of 5-methyl-uridine at position 747 (m5U747) in 23S rRNA. The polypeptide is 23S rRNA (uracil(747)-C(5))-methyltransferase RlmC (Halothiobacillus neapolitanus (strain ATCC 23641 / c2) (Thiobacillus neapolitanus)).